The sequence spans 122 residues: Large ribosomal subunit protein bL17 (122 aa).

The protein belongs to the bacterial ribosomal protein bL17 family. In terms of assembly, part of the 50S ribosomal subunit. Contacts protein L32.

The protein is Large ribosomal subunit protein bL17 of Staphylococcus aureus (strain Mu3 / ATCC 700698).